Here is a 317-residue protein sequence, read N- to C-terminus: Probable methyltransferase tdiE (317 aa).

It belongs to the methyltransferase superfamily. LaeA methyltransferase family.

Its pathway is secondary metabolite biosynthesis. Functionally, probable methyltransferase; part of the gene cluster that mediates the biosynthesis of terrequinone A, an antitumor agent. The first step in the biosynthetic pathway for terrequinone A is formation of indole pyruvic acid (IPA) from L-tryptophan by the aminotransferase tdiD. The nonribosomal peptide synthase tdiA then immediately converts unstable IPA to didemethylasterriquinone D (DDAQ D), via condensation of 2 IPA molecules. The symmetric connectivity of the 2 IPA molecules is thought to arise by head-to-tail dual Claisen condensations facilitated by the TE domain. TdiB then catalyzes reverse prenylation by transferring dimethylallyl diphosphate to carbon atom 2' of DDAQ D, to yield asterriquinone C-1. Finally, tdiC and tdiE enzymes robustly convert asterriquinone C-1 to terrequinone A via a transformation involving regular prenylation at carbon atom 5, which requires elimination of the hydroxy group on C-5. This Emericella nidulans (strain FGSC A4 / ATCC 38163 / CBS 112.46 / NRRL 194 / M139) (Aspergillus nidulans) protein is Probable methyltransferase tdiE.